Consider the following 364-residue polypeptide: Putative methylthioribose-1-phosphate isomerase (364 aa).

Substrate-binding positions include R57–A59, R100, and Q206. The Proton donor role is filled by D247. N257–K258 lines the substrate pocket.

It belongs to the eIF-2B alpha/beta/delta subunits family. MtnA subfamily.

It carries out the reaction 5-(methylsulfanyl)-alpha-D-ribose 1-phosphate = 5-(methylsulfanyl)-D-ribulose 1-phosphate. In terms of biological role, catalyzes the interconversion of methylthioribose-1-phosphate (MTR-1-P) into methylthioribulose-1-phosphate (MTRu-1-P). The chain is Putative methylthioribose-1-phosphate isomerase from Pyrococcus horikoshii (strain ATCC 700860 / DSM 12428 / JCM 9974 / NBRC 100139 / OT-3).